Consider the following 39-residue polypeptide: Fuctinin-3 (39 aa).

A disordered region spans residues 1-39 (KELNSNHDGADETSEKEQQEAIEHIDEVQNEIDRLNETA).

The protein to human SET/PHAPII protein. Oligomer.

The protein localises to the cytoplasm. In terms of biological role, has a role in the physiological regulation of fucosylation processes. This Rattus norvegicus (Rat) protein is Fuctinin-3.